We begin with the raw amino-acid sequence, 250 residues long: Short-chain dehydrogenase RED3 (250 aa).

NADP(+) is bound by residues Ile-16, Ser-35, Glu-63, and Asn-91. Catalysis depends on proton donor residues Ser-145 and Tyr-164. Tyr-164, Lys-168, Val-195, and Ser-197 together coordinate NADP(+). Catalysis depends on Lys-168, which acts as the Lowers pKa of active site Tyr.

Belongs to the short-chain dehydrogenases/reductases (SDR) family.

The protein operates within polyketide biosynthesis. Functionally, short-chain dehydrogenase; part of the gene cluster that mediates the biosynthesis of pyriculol and pyriculariol, two heptaketides that induce lesion formation upon application on rice leaves but are dispensable for pathogenicity. The highly reducing polyketide synthase synthesizes the heptaketide backbone of pyriculol and pyriculariol. Pyriculol and pyriculariol contain several hydroxyl moieties and double bonds, so it can be assumed that several reduction steps occur during biosynthesis. These reactions could be executed by PKS19 itself or partly by the tailoring enzymes OXR1, OXR2, RED1, RED2 or RED3, identified within the cluster. The FAD-linked oxidoreductase OXR1 is the only tailoring enzyme for which the function has been determined yet, and is involved in the oxidation of dihydropyriculol and dihydropyriculariol into pyriculol and pyriculariol, respectively. This Pyricularia oryzae (strain 70-15 / ATCC MYA-4617 / FGSC 8958) (Rice blast fungus) protein is Short-chain dehydrogenase RED3.